Consider the following 203-residue polypeptide: Large ribosomal subunit protein bL25 (203 aa).

The protein belongs to the bacterial ribosomal protein bL25 family. CTC subfamily. Part of the 50S ribosomal subunit; part of the 5S rRNA/L5/L18/L25 subcomplex. Contacts the 5S rRNA. Binds to the 5S rRNA independently of L5 and L18.

Its function is as follows. This is one of the proteins that binds to the 5S RNA in the ribosome where it forms part of the central protuberance. The protein is Large ribosomal subunit protein bL25 of Rickettsia rickettsii (strain Iowa).